The sequence spans 433 residues: Phosphoribosylamine--glycine ligase (433 aa).

One can recognise an ATP-grasp domain in the interval 111–317 (EFMARNNIKG…FVDICEAIVD (207 aa)). Position 138–194 (138–194 (EDNPDVVVKPAGLTGGKGVKVMGEHMHTLEEAREYVKSVLEHDRVVIEERLKGEEVT)) interacts with ATP. Positions 275, 287, and 289 each coordinate Mg(2+). Mn(2+) is bound by residues Gln-275, Glu-287, and Asn-289.

The protein belongs to the GARS family. The cofactor is Mg(2+). It depends on Mn(2+) as a cofactor.

It carries out the reaction 5-phospho-beta-D-ribosylamine + glycine + ATP = N(1)-(5-phospho-beta-D-ribosyl)glycinamide + ADP + phosphate + H(+). It functions in the pathway purine metabolism; IMP biosynthesis via de novo pathway; N(1)-(5-phospho-D-ribosyl)glycinamide from 5-phospho-alpha-D-ribose 1-diphosphate: step 2/2. In Methanocella arvoryzae (strain DSM 22066 / NBRC 105507 / MRE50), this protein is Phosphoribosylamine--glycine ligase.